The chain runs to 668 residues: Transketolase 2 (668 aa).

Position 26 (histidine 26) interacts with substrate. Thiamine diphosphate-binding positions include histidine 66 and 114–116 (GPL). Residue aspartate 155 participates in Mg(2+) binding. 2 residues coordinate thiamine diphosphate: glycine 156 and asparagine 185. Residues asparagine 185 and isoleucine 187 each contribute to the Mg(2+) site. The substrate site is built by histidine 261, arginine 358, and serine 385. Histidine 261 is a thiamine diphosphate binding site. Glutamate 413 acts as the Proton donor in catalysis. Phenylalanine 439 lines the thiamine diphosphate pocket. Substrate contacts are provided by histidine 463, aspartate 471, and arginine 522.

The protein belongs to the transketolase family. As to quaternary structure, homodimer. It depends on Mg(2+) as a cofactor. Ca(2+) serves as cofactor. Mn(2+) is required as a cofactor. Requires Co(2+) as cofactor. The cofactor is thiamine diphosphate.

It carries out the reaction D-sedoheptulose 7-phosphate + D-glyceraldehyde 3-phosphate = aldehydo-D-ribose 5-phosphate + D-xylulose 5-phosphate. In terms of biological role, catalyzes the transfer of a two-carbon ketol group from a ketose donor to an aldose acceptor, via a covalent intermediate with the cofactor thiamine pyrophosphate. In Pasteurella multocida (strain Pm70), this protein is Transketolase 2 (tktB).